The primary structure comprises 787 residues: ER degradation-enhancing alpha-mannosidase-like protein 1 (787 aa).

An N-terminal signal peptide occupies residues 1 to 22 (MGSLHSIFCVCLILLCIFKENS). N-linked (GlcNAc...) asparagine glycosylation is found at N479, N609, N670, N693, and N756.

The protein belongs to the glycosyl hydrolase 47 family.

It is found in the endoplasmic reticulum lumen. Alpha-mannosidase-like protein involved in endoplasmic reticulum-associated degradation (ERAD). Delivers misfolded glycoproteins to proteasomes. It lacks mannosidase activity. This chain is ER degradation-enhancing alpha-mannosidase-like protein 1 (mnl1), found in Schizosaccharomyces pombe (strain 972 / ATCC 24843) (Fission yeast).